Consider the following 396-residue polypeptide: Phosphoglycerate kinase (396 aa).

Substrate contacts are provided by residues 21 to 23 (DFN), arginine 37, 60 to 63 (HLGR), arginine 121, and arginine 154. ATP is bound by residues lysine 205, glycine 296, glutamate 327, and 353-356 (GGDS).

It belongs to the phosphoglycerate kinase family. As to quaternary structure, monomer.

The protein resides in the cytoplasm. It carries out the reaction (2R)-3-phosphoglycerate + ATP = (2R)-3-phospho-glyceroyl phosphate + ADP. It functions in the pathway carbohydrate degradation; glycolysis; pyruvate from D-glyceraldehyde 3-phosphate: step 2/5. The protein is Phosphoglycerate kinase of Anaeromyxobacter sp. (strain Fw109-5).